A 315-amino-acid chain; its full sequence is Glucokinase-like protein CC_3167 (315 aa).

This sequence belongs to the bacterial glucokinase family.

The protein is Glucokinase-like protein CC_3167 of Caulobacter vibrioides (strain ATCC 19089 / CIP 103742 / CB 15) (Caulobacter crescentus).